Reading from the N-terminus, the 47-residue chain is Protein YpaB (47 aa).

This Escherichia coli (strain K12) protein is Protein YpaB (ypaB).